The sequence spans 663 residues: MRKLYHGACYYPELWDEETIQQDIDIMREVGVNVVRIGEFAWSVMEPEEGKIDVGFFKEIIARLYDSGIETIMCTPTPTPPIWFSHGRPERMHANEKREIMGHGSRQHACTNNPYFRKKAAIITTAIAKELGRLPGLIGWQLDNEFKCHVAECMCETCLRLWHDWLKNRYGVIERLNEAWGTDVWSETYQTFEQVPQPGPAPFLHHASLRTMYQLFSMEMIASFADEQAKIIRCYSDAPITHNGSVMFSVDNERMFQNLDFASYDTYASQENASAFLLNCDLWRNLKQGRPFWILETSPSYAASLESSAYPHADGYLQAEAVSSYALGSQGFCYWLWRQQRSGSEISHGSVLSAWGEPTIGYQNVLAVERARKEIEPIILSTEPVQAEAAMTYSDRAKAFIKTEPHRGLRHRSLVTHFYERILNTGIHRDLIPEGAPLDGYRLLFTPFVPYLSSEFIKKASAFAEAGGIWITGPLTGGRTCEHTIHTDCGLGELEKTSGIKTLFTFPMNENVNTGKAFGITAPLGLWSAVFDTESGNTLGTVEAGPGAGHAFLTERNYGEGKIVMLGSLPSGKEGDAMLEALVRHYAEEAVISSRSDVTPGTIVAPRIGENGLVWIVVNMDGKGGSVTLPESGTDLLTHRLEKAGRLAVGPHEYRVIQFDNHS.

Substrate is bound at residue arginine 106. Cysteine 110 lines the Zn(2+) pocket. Asparagine 144 provides a ligand contact to substrate. Catalysis depends on glutamate 145, which acts as the Proton donor. Residues cysteine 153, cysteine 155, and cysteine 158 each coordinate Zn(2+). Glutamate 296 acts as the Nucleophile in catalysis. 345 to 348 provides a ligand contact to substrate; sequence EISH.

This sequence belongs to the glycosyl hydrolase 42 family. As to quaternary structure, homotrimer.

It carries out the reaction Hydrolysis of terminal non-reducing beta-D-galactose residues in beta-D-galactosides.. Functionally, may play a role in the degradation of rhamnogalacturonan derived from plant cell walls. This chain is Beta-galactosidase YesZ (yesZ), found in Bacillus subtilis (strain 168).